A 190-amino-acid polypeptide reads, in one-letter code: Ribose 1,5-bisphosphate phosphokinase PhnN (190 aa).

11–18 is an ATP binding site; sequence GPSGSGKD.

It belongs to the ribose 1,5-bisphosphokinase family.

It catalyses the reaction alpha-D-ribose 1,5-bisphosphate + ATP = 5-phospho-alpha-D-ribose 1-diphosphate + ADP. It functions in the pathway metabolic intermediate biosynthesis; 5-phospho-alpha-D-ribose 1-diphosphate biosynthesis; 5-phospho-alpha-D-ribose 1-diphosphate from D-ribose 5-phosphate (route II): step 3/3. Functionally, catalyzes the phosphorylation of ribose 1,5-bisphosphate to 5-phospho-D-ribosyl alpha-1-diphosphate (PRPP). The chain is Ribose 1,5-bisphosphate phosphokinase PhnN from Thiobacillus denitrificans (strain ATCC 25259 / T1).